The primary structure comprises 271 residues: Regulatory protein RecX (271 aa).

The protein belongs to the RecX family.

The protein localises to the cytoplasm. Its function is as follows. Modulates RecA activity. The chain is Regulatory protein RecX from Lactobacillus johnsonii (strain CNCM I-12250 / La1 / NCC 533).